The following is a 1040-amino-acid chain: Protocadherin-10 (1040 aa).

The signal sequence occupies residues Met-1–Ser-18. Cadherin domains lie at Gln-19–Phe-122, Pro-123–Phe-250, Asp-251–Ile-358, Ser-359–Phe-463, Ser-464–Ile-574, and Asn-582–Gly-690. The Extracellular segment spans residues Gln-19–Thr-715. Gly residues predominate over residues Gly-207 to Gly-223. Positions Gly-207–Gln-228 are disordered. N-linked (GlcNAc...) asparagine glycosylation is present at Asn-273. Residue Asn-557 is glycosylated (N-linked (GlcNAc...) asparagine). Over residues Gln-686–Gly-697 the composition is skewed to gly residues. The segment at Gln-686–Gly-708 is disordered. Residues Leu-716–Leu-736 traverse the membrane as a helical segment. Over Ala-737–Cys-1040 the chain is Cytoplasmic. Residues Ala-899–Asn-927 form a disordered region. The segment covering Asp-910–Thr-926 has biased composition (basic and acidic residues).

Moderately expressed in all regions of the brain examined, as well as in testis and ovary, and low expression in all other tissues tested.

Its subcellular location is the cell membrane. Potential calcium-dependent cell-adhesion protein. In terms of biological role, (Microbial infection) Acts as a receptor for Western equine encephalitis virus. The sequence is that of Protocadherin-10 (PCDH10) from Homo sapiens (Human).